The following is a 284-amino-acid chain: uncharacterized protein (284 aa).

The signal sequence occupies residues 1 to 23; the sequence is MKRGCAIAVMICGLITSVSAASA.

It belongs to the surface antigen msp4 family.

This is an uncharacterized protein from Brucella abortus (strain 2308).